We begin with the raw amino-acid sequence, 202 residues long: Nucleoside triphosphate pyrophosphatase (202 aa).

Residue aspartate 79 is the Proton acceptor of the active site.

This sequence belongs to the Maf family. A divalent metal cation serves as cofactor.

Its subcellular location is the cytoplasm. The enzyme catalyses a ribonucleoside 5'-triphosphate + H2O = a ribonucleoside 5'-phosphate + diphosphate + H(+). The catalysed reaction is a 2'-deoxyribonucleoside 5'-triphosphate + H2O = a 2'-deoxyribonucleoside 5'-phosphate + diphosphate + H(+). In terms of biological role, nucleoside triphosphate pyrophosphatase. May have a dual role in cell division arrest and in preventing the incorporation of modified nucleotides into cellular nucleic acids. The polypeptide is Nucleoside triphosphate pyrophosphatase (Rhodopseudomonas palustris (strain BisB5)).